The sequence spans 225 residues: uncharacterized protein (225 aa).

This is an uncharacterized protein from Methanocaldococcus jannaschii (strain ATCC 43067 / DSM 2661 / JAL-1 / JCM 10045 / NBRC 100440) (Methanococcus jannaschii).